Reading from the N-terminus, the 393-residue chain is uncharacterized protein (393 aa).

This is an uncharacterized protein from Methanocaldococcus jannaschii (strain ATCC 43067 / DSM 2661 / JAL-1 / JCM 10045 / NBRC 100440) (Methanococcus jannaschii).